Reading from the N-terminus, the 152-residue chain is Transcriptional regulator MraZ (152 aa).

2 SpoVT-AbrB domains span residues 5–52 (ASAI…PLHE) and 81–124 (AHEV…DEQA).

Belongs to the MraZ family. In terms of assembly, forms oligomers.

It is found in the cytoplasm. The protein resides in the nucleoid. The chain is Transcriptional regulator MraZ from Shewanella sp. (strain MR-7).